Here is a 116-residue protein sequence, read N- to C-terminus: Holo-[acyl-carrier-protein] synthase (116 aa).

Mg(2+) contacts are provided by D8 and E50.

This sequence belongs to the P-Pant transferase superfamily. AcpS family. Mg(2+) serves as cofactor.

The protein localises to the cytoplasm. The enzyme catalyses apo-[ACP] + CoA = holo-[ACP] + adenosine 3',5'-bisphosphate + H(+). Transfers the 4'-phosphopantetheine moiety from coenzyme A to a Ser of acyl-carrier-protein. This Beutenbergia cavernae (strain ATCC BAA-8 / DSM 12333 / CCUG 43141 / JCM 11478 / NBRC 16432 / NCIMB 13614 / HKI 0122) protein is Holo-[acyl-carrier-protein] synthase.